A 224-amino-acid polypeptide reads, in one-letter code: Response regulator protein GraR (224 aa).

The 114-residue stretch at 2 to 115 (QILLVEDDNT…VLIAKLQAIY (114 aa)) folds into the Response regulatory domain. Aspartate 51 carries the 4-aspartylphosphate modification. Residues 126-224 (KRTLTWQDAV…KVGKGYMAHE (99 aa)) constitute a DNA-binding region (ompR/PhoB-type). Phosphothreonine occurs at positions 128, 130, and 149.

Interacts with GraX. Phosphorylated by GraS. Phosphorylated by Stk1; phosphorylation increases the DNA-binding activity of GraR.

It localises to the cytoplasm. Functionally, member of the two-component regulatory system GraR/GraS involved in resistance against cationic antimicrobial peptides (CAMPs). Upon phosphorylation by GraS, functions as a transcription regulator by direct binding to promoter regions of target genes such as adhesins, exoproteins, transporters, toxins, and proteins involved in cell wall synthesis. Down-regulates the expression of many genes involved in RNA and amino acid synthesis or glycolysis. In Staphylococcus aureus (strain Mu50 / ATCC 700699), this protein is Response regulator protein GraR (graR).